A 191-amino-acid polypeptide reads, in one-letter code: PBAN-type neuropeptides (191 aa).

The N-terminal stretch at 1-17 (MFSPLLFFAVSISCVLA) is a signal peptide. L44 carries the post-translational modification Leucine amide. A propeptide spanning residues 48-91 (SLRISTEDNRQAFFKLLEAADALKYYYDRLPYEMQADEPETRVT) is cleaved from the precursor. 4 positions are modified to leucine amide: L100, L120, L156, and L166. Positions 169-191 (ELSYDMLPSKLRLVRSTNRTQST) are excised as a propeptide.

It belongs to the pyrokinin family. Expressed in the subesophageal ganglion.

It is found in the secreted. Its function is as follows. A hormone that controls sex pheromone production in females and pheromone responsiveness in male. The protein is PBAN-type neuropeptides of Spodoptera littoralis (Egyptian cotton leafworm).